A 707-amino-acid polypeptide reads, in one-letter code: Polyribonucleotide nucleotidyltransferase (707 aa).

The Mg(2+) site is built by Asp487 and Asp493. The region spanning 554-613 (PSMATIKIDPDKIRDVIGKGGATIRKICDDTGASIDLDDDGTVRIYAEDKTAAKAAIDTV) is the KH domain. The region spanning 623–691 (GKLYRGTVAR…NRNRVKLSIK (69 aa)) is the S1 motif domain.

The protein belongs to the polyribonucleotide nucleotidyltransferase family. Component of the RNA degradosome, which is a multiprotein complex involved in RNA processing and mRNA degradation. Requires Mg(2+) as cofactor.

It is found in the cytoplasm. The enzyme catalyses RNA(n+1) + phosphate = RNA(n) + a ribonucleoside 5'-diphosphate. Its function is as follows. Involved in mRNA degradation. Catalyzes the phosphorolysis of single-stranded polyribonucleotides processively in the 3'- to 5'-direction. This is Polyribonucleotide nucleotidyltransferase from Chromohalobacter salexigens (strain ATCC BAA-138 / DSM 3043 / CIP 106854 / NCIMB 13768 / 1H11).